The chain runs to 676 residues: MFTVTPAKIYLNQEKTPVSEQFNDVYFSNQDGLAESEYVFQQGNHLWERWIVYQEKHFVIAETGFGTGLNFLAVTSLFRQFRQQYSHSPLKHLFFISFEKYPLPKVQLQQIHQFYPQFSALSQQLCDYCLEAIQGCQRFHFAETTLDLWFGDIVDNLPQLGDYMQNRIDAWFLDGFSPSKNPQMWNDELYQQMFYYSKPQGTFSTFTAASAVRKGLVSAGFEVQKRKGYGKKRECLCGIKNAIPQQNTKAPWYLSQPASLLSEDIAIIGGGIASLFTALSLLKRGAKITLYCEDEQLALNASGNKQGAFYPQLSDDDDRNIRFYVHAFFYALQQLQWAIKQGIEFEHEFCGVALCAYDHKSAVKLAKISSYQWSKSLYQNLNKEQLSEKIGLPLDCAGGFIPQGGWLAPRQFVQNTFSYLQQLGLEIKTSQKITALDYRNLQWVLTNEQNETFNHQVVVLANGYQITDFVQTAKLPLYPVRGQVSQIPTSANLLKLKSVLCYDGYLTPADKMKQSHCLGASHIRNNKDRHFSHQEQRENQQKIQQNLASTDTDKNMDWLQDIDISANIARIGVRCSVRDRVPIMGNVPHFEQQCLDYRNIFNLRRRKQPIPDAAQWKNLYLIGALGSRGLTSAALLGETLASLIYAEPLPLSEDILHNLSPNRSWIRKLLKGTEIK.

The interval 1-241 is tRNA (mnm(5)s(2)U34)-methyltransferase; that stretch reads MFTVTPAKIY…KRECLCGIKN (241 aa). Residues 268–676 form an FAD-dependent cmnm(5)s(2)U34 oxidoreductase region; the sequence is IGGGIASLFT…RKLLKGTEIK (409 aa).

In the N-terminal section; belongs to the methyltransferase superfamily. tRNA (mnm(5)s(2)U34)-methyltransferase family. This sequence in the C-terminal section; belongs to the DAO family. It depends on FAD as a cofactor.

Its subcellular location is the cytoplasm. The enzyme catalyses 5-aminomethyl-2-thiouridine(34) in tRNA + S-adenosyl-L-methionine = 5-methylaminomethyl-2-thiouridine(34) in tRNA + S-adenosyl-L-homocysteine + H(+). Functionally, catalyzes the last two steps in the biosynthesis of 5-methylaminomethyl-2-thiouridine (mnm(5)s(2)U) at the wobble position (U34) in tRNA. Catalyzes the FAD-dependent demodification of cmnm(5)s(2)U34 to nm(5)s(2)U34, followed by the transfer of a methyl group from S-adenosyl-L-methionine to nm(5)s(2)U34, to form mnm(5)s(2)U34. The chain is tRNA 5-methylaminomethyl-2-thiouridine biosynthesis bifunctional protein MnmC from Histophilus somni (strain 2336) (Haemophilus somnus).